A 257-amino-acid chain; its full sequence is DNA repair protein RecO (257 aa).

It belongs to the RecO family.

Involved in DNA repair and RecF pathway recombination. In Streptococcus sanguinis (strain SK36), this protein is DNA repair protein RecO.